The following is a 323-amino-acid chain: Acetyl-coenzyme A carboxylase carboxyl transferase subunit alpha (323 aa).

Residues 39 to 293 form the CoA carboxyltransferase C-terminal domain; it reads RLAGKSQQLT…KRSLAESLRQ (255 aa).

The protein belongs to the AccA family. As to quaternary structure, acetyl-CoA carboxylase is a heterohexamer composed of biotin carboxyl carrier protein (AccB), biotin carboxylase (AccC) and two subunits each of ACCase subunit alpha (AccA) and ACCase subunit beta (AccD).

The protein resides in the cytoplasm. The enzyme catalyses N(6)-carboxybiotinyl-L-lysyl-[protein] + acetyl-CoA = N(6)-biotinyl-L-lysyl-[protein] + malonyl-CoA. Its pathway is lipid metabolism; malonyl-CoA biosynthesis; malonyl-CoA from acetyl-CoA: step 1/1. Component of the acetyl coenzyme A carboxylase (ACC) complex. First, biotin carboxylase catalyzes the carboxylation of biotin on its carrier protein (BCCP) and then the CO(2) group is transferred by the carboxyltransferase to acetyl-CoA to form malonyl-CoA. This is Acetyl-coenzyme A carboxylase carboxyl transferase subunit alpha from Cupriavidus pinatubonensis (strain JMP 134 / LMG 1197) (Cupriavidus necator (strain JMP 134)).